A 1404-amino-acid polypeptide reads, in one-letter code: DNA-directed RNA polymerase subunit beta' (1404 aa).

Residues Cys-70, Cys-72, Cys-85, and Cys-88 each coordinate Zn(2+). Residues Asp-460, Asp-462, and Asp-464 each coordinate Mg(2+). Residues Cys-814, Cys-888, Cys-895, and Cys-898 each contribute to the Zn(2+) site.

It belongs to the RNA polymerase beta' chain family. As to quaternary structure, the RNAP catalytic core consists of 2 alpha, 1 beta, 1 beta' and 1 omega subunit. When a sigma factor is associated with the core the holoenzyme is formed, which can initiate transcription. The cofactor is Mg(2+). Requires Zn(2+) as cofactor.

The enzyme catalyses RNA(n) + a ribonucleoside 5'-triphosphate = RNA(n+1) + diphosphate. Its function is as follows. DNA-dependent RNA polymerase catalyzes the transcription of DNA into RNA using the four ribonucleoside triphosphates as substrates. The sequence is that of DNA-directed RNA polymerase subunit beta' from Shewanella piezotolerans (strain WP3 / JCM 13877).